The sequence spans 231 residues: Uridylate kinase (231 aa).

Position 9 to 12 (9 to 12 (KLSG)) interacts with ATP. Gly-49 contributes to the UMP binding site. Gly-50 and Arg-54 together coordinate ATP. UMP-binding positions include Asp-69 and 130–137 (AGMPYFST). Residues Asn-158, Tyr-164, and Asp-167 each coordinate ATP.

Belongs to the UMP kinase family. Homohexamer.

Its subcellular location is the cytoplasm. It carries out the reaction UMP + ATP = UDP + ADP. Its pathway is pyrimidine metabolism; CTP biosynthesis via de novo pathway; UDP from UMP (UMPK route): step 1/1. Inhibited by UTP. Catalyzes the reversible phosphorylation of UMP to UDP. This Tropheryma whipplei (strain Twist) (Whipple's bacillus) protein is Uridylate kinase.